Consider the following 238-residue polypeptide: Thrombin-like enzyme halystase (238 aa).

The 229-residue stretch at 1–229 (IIGGDECNIN…HLDWIKSIIA (229 aa)) folds into the Peptidase S1 domain. 6 disulfides stabilise this stretch: C7/C141, C28/C44, C76/C236, C120/C190, C152/C169, and C180/C205. H43 serves as the catalytic Charge relay system. The N-linked (GlcNAc...) asparagine glycan is linked to N81. D88 serves as the catalytic Charge relay system. N-linked (GlcNAc...) asparagine glycosylation is present at N100. The active-site Charge relay system is the S184.

It belongs to the peptidase S1 family. Snake venom subfamily. As to quaternary structure, monomer. In terms of tissue distribution, expressed by the venom gland.

It is found in the secreted. Inhibited by diisopropylfluorophosphate (DFP), PMSF and leupeptin. In terms of biological role, thrombin-like snake venom serine protease. Cleaves fibrinogen (beta chain of fibrinogen (FGB) and more slowly alpha chain (FGA)) without inducing fibrin clotting and cleaves kininogen to produce bradykinin (KNG), resulting in the reduction of blood pressure. The sequence is that of Thrombin-like enzyme halystase from Gloydius blomhoffii (Mamushi).